A 253-amino-acid chain; its full sequence is Discoidin-1 subunit B/C (253 aa).

The residue at position 2 (Ser-2) is an N-acetylserine. Positions 2-152 (STQGLVQLIS…ISLRCEFYTQ (151 aa)) constitute an F5/8 type C domain. The short motif at 79-81 (RGD) is the Cell attachment site element.

In terms of assembly, tetramer of four different chains (A to D). In terms of tissue distribution, stalk cells.

The protein resides in the cytoplasm. Its function is as follows. Galactose- and N-acetylgalactosamine-binding lectin. May play a role in cell-substratum adhesion rather than in cell-cell adhesion. May be necessary for the maintenance of normal elongate morphology during aggregation. The chain is Discoidin-1 subunit B/C (dscC-1) from Dictyostelium discoideum (Social amoeba).